The sequence spans 249 residues: Ribosomal RNA small subunit methyltransferase J (249 aa).

S-adenosyl-L-methionine is bound by residues 101 to 102, 117 to 118, and Asp171; these read RD and ER.

Belongs to the methyltransferase superfamily. RsmJ family.

It is found in the cytoplasm. It catalyses the reaction guanosine(1516) in 16S rRNA + S-adenosyl-L-methionine = N(2)-methylguanosine(1516) in 16S rRNA + S-adenosyl-L-homocysteine + H(+). Functionally, specifically methylates the guanosine in position 1516 of 16S rRNA. The polypeptide is Ribosomal RNA small subunit methyltransferase J (Tolumonas auensis (strain DSM 9187 / NBRC 110442 / TA 4)).